The primary structure comprises 397 residues: Succinate--CoA ligase [ADP-forming] subunit beta (397 aa).

The ATP-grasp domain maps to 9 to 254 (KALLKSFGAP…ETEQDAKELE (246 aa)). ATP contacts are provided by residues K46, 53–55 (GRG), E109, A112, and E117. The Mg(2+) site is built by N209 and D223. Residues N274 and 331 to 333 (GIM) contribute to the substrate site.

It belongs to the succinate/malate CoA ligase beta subunit family. Heterotetramer of two alpha and two beta subunits. Requires Mg(2+) as cofactor.

It catalyses the reaction succinate + ATP + CoA = succinyl-CoA + ADP + phosphate. It carries out the reaction GTP + succinate + CoA = succinyl-CoA + GDP + phosphate. Its pathway is carbohydrate metabolism; tricarboxylic acid cycle; succinate from succinyl-CoA (ligase route): step 1/1. Its function is as follows. Succinyl-CoA synthetase functions in the citric acid cycle (TCA), coupling the hydrolysis of succinyl-CoA to the synthesis of either ATP or GTP and thus represents the only step of substrate-level phosphorylation in the TCA. The beta subunit provides nucleotide specificity of the enzyme and binds the substrate succinate, while the binding sites for coenzyme A and phosphate are found in the alpha subunit. In Hyphomonas neptunium (strain ATCC 15444), this protein is Succinate--CoA ligase [ADP-forming] subunit beta.